Here is a 501-residue protein sequence, read N- to C-terminus: Phenylalanine--tRNA ligase alpha subunit (501 aa).

Residues T340 and F423 each contribute to the L-phenylalanine site. Position 425 (E425) interacts with Mg(2+). Position 448 (F448) interacts with L-phenylalanine.

Belongs to the class-II aminoacyl-tRNA synthetase family. Phe-tRNA synthetase alpha subunit type 2 subfamily. In terms of assembly, tetramer of two alpha and two beta subunits. It depends on Mg(2+) as a cofactor.

It localises to the cytoplasm. It carries out the reaction tRNA(Phe) + L-phenylalanine + ATP = L-phenylalanyl-tRNA(Phe) + AMP + diphosphate + H(+). The chain is Phenylalanine--tRNA ligase alpha subunit from Methanococcus maripaludis (strain C7 / ATCC BAA-1331).